A 174-amino-acid polypeptide reads, in one-letter code: NADH-ubiquinone oxidoreductase chain 6 (174 aa).

5 helical membrane-spanning segments follow: residues 4–24 (LIIM…KHPL), 25–45 (SMGL…GIYV), 48–68 (FWFS…LFIY), 82–102 (FNLT…FFII), and 143–163 (LITL…VKIT).

The protein belongs to the complex I subunit 6 family.

The protein localises to the mitochondrion membrane. The enzyme catalyses a ubiquinone + NADH + 5 H(+)(in) = a ubiquinol + NAD(+) + 4 H(+)(out). Core subunit of the mitochondrial membrane respiratory chain NADH dehydrogenase (Complex I) that is believed to belong to the minimal assembly required for catalysis. Complex I functions in the transfer of electrons from NADH to the respiratory chain. The immediate electron acceptor for the enzyme is believed to be ubiquinone. The chain is NADH-ubiquinone oxidoreductase chain 6 (ND6) from Anopheles quadrimaculatus (Common malaria mosquito).